Here is a 119-residue protein sequence, read N- to C-terminus: Large ribosomal subunit protein bL20 (119 aa).

It belongs to the bacterial ribosomal protein bL20 family. Part of the 50S ribosomal subunit.

Binds directly to 23S ribosomal RNA and is necessary for the in vitro assembly process of the 50S ribosomal subunit. It is not involved in the protein synthesizing functions of that subunit. The chain is Large ribosomal subunit protein bL20 (rplT) from Bacillus subtilis (strain 168).